The sequence spans 374 residues: Peptidoglycan recognition protein 4 (374 aa).

An N-terminal signal peptide occupies residues M1–S20. N-linked (GlcNAc...) asparagine glycans are attached at residues N39, N93, and N146. 2 consecutive N-acetylmuramoyl-L-alanine amidase domains span residues R76–P212 and P233–G359. 3 cysteine pairs are disulfide-bonded: C211-C333, C227-C271, and C247-C253. Residue Y275 participates in peptidoglycan binding. Interaction with murein regions lie at residues Q294 to D303 and N354 to T355.

This sequence belongs to the N-acetylmuramoyl-L-alanine amidase 2 family. In terms of assembly, homodimer; disulfide-linked. Heterodimer with PGLYRP3; disulfide-linked. As to expression, ubiquitous.

The protein localises to the secreted. Functionally, pattern receptor that binds to murein peptidoglycans (PGN) of Gram-positive bacteria. Has bactericidal activity towards Gram-positive bacteria. May kill Gram-positive bacteria by interfering with peptidoglycan biosynthesis. Also binds to Gram-negative bacteria, and has bacteriostatic activity towards Gram-negative bacteria. Plays a role in innate immunity. The sequence is that of Peptidoglycan recognition protein 4 (Pglyrp4) from Mus musculus (Mouse).